The primary structure comprises 33 residues: Photosystem II reaction center protein Psb30 (33 aa).

A helical membrane pass occupies residues 8 to 28; the sequence is QLGSLLLITVAGPLIVFFLFI.

It belongs to the Psb30/Ycf12 family. In terms of assembly, PSII is composed of 1 copy each of membrane proteins PsbA, PsbB, PsbC, PsbD, PsbE, PsbF, PsbH, PsbI, PsbJ, PsbK, PsbL, PsbM, PsbT, PsbY, PsbZ, Psb30/Ycf12, peripheral proteins of the oxygen-evolving complex and a large number of cofactors. It forms dimeric complexes.

Its subcellular location is the plastid. It is found in the chloroplast thylakoid membrane. A core subunit of photosystem II (PSII), probably helps stabilize the reaction center. In Euglena anabaena (Euglenaria anabaena), this protein is Photosystem II reaction center protein Psb30.